A 466-amino-acid chain; its full sequence is Ribosome biogenesis protein YTM1 (466 aa).

A ubiquitin-like (UBL) domain region spans residues 11-99 (IKIKFFTNEE…EAFLTLEYTR (89 aa)). A sufficient for interaction with ERB1 and association with 66S pre-ribosomes region spans residues 109–466 (SFNNDDWISS…QINKGSDIAK (358 aa)). 7 WD repeats span residues 124–163 (PTTK…EKQY), 165–203 (GHSA…IIDE), 219–258 (GHKA…MTSI), 296–336 (GHSE…CVDT), 338–377 (TTGY…TSDQ), 384–424 (GHTN…SLYT), and 431–466 (STNA…DIAK).

Belongs to the WD repeat WDR12/YTM1 family. Component of the NOP7 complex, composed of ERB1, NOP7 and YTM1. The complex is held together by ERB1, which interacts with NOP7 via its N-terminal domain and with YTM1 via a high-affinity interaction between the seven-bladed beta-propeller domains of the 2 proteins. The NOP7 complex associates with the 66S pre-ribosome. Interacts (via UBL domain) with MDN1 (via VWFA/MIDAS domain).

It is found in the nucleus. The protein resides in the nucleolus. Its subcellular location is the nucleoplasm. Component of the NOP7 complex, which is required for maturation of the 25S and 5.8S ribosomal RNAs and formation of the 60S ribosome. This Candida albicans (strain SC5314 / ATCC MYA-2876) (Yeast) protein is Ribosome biogenesis protein YTM1.